We begin with the raw amino-acid sequence, 731 residues long: Putative beta-galactosidase (731 aa).

An N-terminal signal peptide occupies residues 1-29 (MLCGKENNVMKMMLVYVFVLITLISCVYG). Glu187 serves as the catalytic Proton donor. Glu257 (nucleophile) is an active-site residue.

It belongs to the glycosyl hydrolase 35 family. In terms of tissue distribution, senescing flower petals.

The enzyme catalyses Hydrolysis of terminal non-reducing beta-D-galactose residues in beta-D-galactosides.. The polypeptide is Putative beta-galactosidase (CARSR12) (Dianthus caryophyllus (Carnation)).